A 303-amino-acid chain; its full sequence is Zinc import ATP-binding protein ZnuC (303 aa).

Residues 17 to 232 (VSLENVGVLR…PEYVRLFGSR (216 aa)) form the ABC transporter domain. 49 to 56 (GPNGSGKS) lines the ATP pocket. Residues 263–303 (DHCHPDDGHHAHEHGHAGHEHDHDHPDHAHPHAHEAGERHA) form a disordered region.

The protein belongs to the ABC transporter superfamily. Zinc importer (TC 3.A.1.15.5) family. As to quaternary structure, the complex is composed of two ATP-binding proteins (ZnuC), two transmembrane proteins (ZnuB) and a solute-binding protein (ZnuA).

The protein resides in the cell inner membrane. It catalyses the reaction Zn(2+)(out) + ATP(in) + H2O(in) = Zn(2+)(in) + ADP(in) + phosphate(in) + H(+)(in). Functionally, part of the ABC transporter complex ZnuABC involved in zinc import. Responsible for energy coupling to the transport system. The sequence is that of Zinc import ATP-binding protein ZnuC from Rhizobium johnstonii (strain DSM 114642 / LMG 32736 / 3841) (Rhizobium leguminosarum bv. viciae).